The chain runs to 325 residues: Protease HtpX homolog 2 (325 aa).

Helical transmembrane passes span 10 to 30 (LNMA…ALAV) and 41 to 61 (VGLI…QWLF). His147 contributes to the Zn(2+) binding site. Residue Glu148 is part of the active site. Residue His151 coordinates Zn(2+). The next 2 membrane-spanning stretches (helical) occupy residues 159–179 (LLMA…WLFW) and 196–216 (LVFL…LLVL). Zn(2+) is bound at residue Glu223.

The protein belongs to the peptidase M48B family. Zn(2+) is required as a cofactor.

It is found in the cell membrane. The chain is Protease HtpX homolog 2 from Saccharolobus solfataricus (strain ATCC 35092 / DSM 1617 / JCM 11322 / P2) (Sulfolobus solfataricus).